The sequence spans 101 residues: Small ribosomal subunit protein uS14 (101 aa).

Residues 1-10 (MAKNSMVERD) are compositionally biased toward basic and acidic residues. The disordered stretch occupies residues 1–20 (MAKNSMVERDRKRRKLAQKY).

This sequence belongs to the universal ribosomal protein uS14 family. As to quaternary structure, part of the 30S ribosomal subunit. Contacts proteins S3 and S10.

Its function is as follows. Binds 16S rRNA, required for the assembly of 30S particles and may also be responsible for determining the conformation of the 16S rRNA at the A site. The polypeptide is Small ribosomal subunit protein uS14 (Halorhodospira halophila (strain DSM 244 / SL1) (Ectothiorhodospira halophila (strain DSM 244 / SL1))).